A 317-amino-acid polypeptide reads, in one-letter code: Melanocyte-stimulating hormone receptor (317 aa).

The Extracellular segment spans residues 1 to 37 (MPVQGSQRRLLGSLNSTPTATPHLGLAANQTGARCLE). A glycan (N-linked (GlcNAc...) asparagine) is linked at Asn29. Residues 38-63 (VSVPDGLFLSLGLVSLVENVLVVTAI) form a helical membrane-spanning segment. At 64 to 72 (AKNRNLHSP) the chain is on the cytoplasmic side. Residues 73–93 (MYCFICCLALSDLLVSGSNML) traverse the membrane as a helical segment. The Extracellular portion of the chain corresponds to 94 to 118 (ETAVTLLLEAGALAARAAVVQQLDN). The helical transmembrane segment at 119-140 (VIDVITCSSMLSSLCFLGAIAV) threads the bilayer. The Cytoplasmic segment spans residues 141 to 163 (DRYISIFYALRYHSIVTLPRARR). The chain crosses the membrane as a helical span at residues 164 to 183 (AVAAIWVASVLFSTLFIAYY). Over 184–191 (DHAAVLLC) the chain is Extracellular. The helical transmembrane segment at 192–211 (LVIFFLAMLVLMAVLYVHML) threads the bilayer. At 212 to 240 (ARACQHAQGIARLHKRQRLAHQGFGLKGA) the chain is on the cytoplasmic side. Residues 241 to 266 (ATLTILLGIFFLCWGPFFLHLTLIVL) form a helical membrane-spanning segment. Topologically, residues 267-279 (CPQHPTCSCIFKN) are extracellular. The helical transmembrane segment at 280 to 300 (FNLFLALIICNAIIDPLIYAF) threads the bilayer. The Cytoplasmic segment spans residues 301-317 (RSQELRRTLKEVLLCSW). Cys315 is lipidated: S-palmitoyl cysteine.

This sequence belongs to the G-protein coupled receptor 1 family. As to quaternary structure, interacts with MGRN1, but does not undergo MGRN1-mediated ubiquitination; this interaction competes with GNAS-binding and thus inhibits agonist-induced cAMP production. Interacts with OPN3; the interaction results in a decrease in MC1R-mediated cAMP signaling and ultimately a decrease in melanin production in melanocytes.

It localises to the cell membrane. In terms of biological role, receptor for MSH (alpha, beta and gamma) and ACTH. The activity of this receptor is mediated by G proteins which activate adenylate cyclase. Mediates melanogenesis, the production of eumelanin (black/brown) and phaeomelanin (red/yellow), via regulation of cAMP signaling in melanocytes. The polypeptide is Melanocyte-stimulating hormone receptor (MC1R) (Papio hamadryas (Hamadryas baboon)).